The sequence spans 324 residues: DNA-directed RNA polymerase subunit alpha (324 aa).

An alpha N-terminal domain (alpha-NTD) region spans residues M1 to S228. The tract at residues R245–K324 is alpha C-terminal domain (alpha-CTD).

Belongs to the RNA polymerase alpha chain family. In terms of assembly, homodimer. The RNAP catalytic core consists of 2 alpha, 1 beta, 1 beta' and 1 omega subunit. When a sigma factor is associated with the core the holoenzyme is formed, which can initiate transcription.

It catalyses the reaction RNA(n) + a ribonucleoside 5'-triphosphate = RNA(n+1) + diphosphate. In terms of biological role, DNA-dependent RNA polymerase catalyzes the transcription of DNA into RNA using the four ribonucleoside triphosphates as substrates. The protein is DNA-directed RNA polymerase subunit alpha of Caldicellulosiruptor saccharolyticus (strain ATCC 43494 / DSM 8903 / Tp8T 6331).